A 362-amino-acid polypeptide reads, in one-letter code: Protein mom-2 (362 aa).

A signal peptide spans 1 to 24 (MHINTPVLLAIIYFLVFAPKSADA). 5 cysteine pairs are disulfide-bonded: Cys-80-Cys-91, Cys-129-Cys-137, Cys-139-Cys-167, Cys-217-Cys-231, and Cys-219-Cys-226. Asn-90 carries an N-linked (GlcNAc...) asparagine glycan. Residue Ser-223 is the site of O-palmitoleoyl serine; by mom-1 attachment. Residues 263–282 (TVRSSPSAGSSGRSERFARN) form a disordered region. The span at 265–274 (RSSPSAGSSG) shows a compositional bias: low complexity. Disulfide bonds link Cys-304–Cys-322, Cys-313–Cys-317, Cys-321–Cys-361, Cys-337–Cys-352, Cys-339–Cys-349, and Cys-344–Cys-345.

This sequence belongs to the Wnt family. In terms of processing, palmitoleoylation is required for efficient binding to frizzled receptors. Depalmitoleoylation leads to Wnt signaling pathway inhibition. In terms of tissue distribution, expressed by anchor cell and vulva precursor cell descendants P5.ppa, P5.ppp, P7.paa and P7.pap. Expressed in the tail and weakly expressed in the vulva and body wall muscles.

The protein resides in the secreted. The protein localises to the extracellular space. It is found in the extracellular matrix. Functionally, ligand for members of the frizzled family of seven transmembrane receptors. Required in embryonic development for endoderm specification and the correct positioning and orientation of the mitotic spindles and division planes in blastomere cells. Involved in cleavage axis determination. Binds to receptor tyrosine kinase cam-1. Together with wnt ligand lin-44, plays a role in controlling vulva precursor cell P7.p lineage orientation during vulva development, probably by acting as a ligand for tyrosine kinase receptor lin-18. May act redundantly with other Wnt ligands such as cwn-1 and cwn-2 to control seam cell polarity. This is Protein mom-2 (mom-2) from Caenorhabditis elegans.